Consider the following 103-residue polypeptide: Pyrimidine/purine nucleoside phosphorylase (103 aa).

Belongs to the nucleoside phosphorylase PpnP family.

The enzyme catalyses a purine D-ribonucleoside + phosphate = a purine nucleobase + alpha-D-ribose 1-phosphate. It catalyses the reaction adenosine + phosphate = alpha-D-ribose 1-phosphate + adenine. It carries out the reaction cytidine + phosphate = cytosine + alpha-D-ribose 1-phosphate. The catalysed reaction is guanosine + phosphate = alpha-D-ribose 1-phosphate + guanine. The enzyme catalyses inosine + phosphate = alpha-D-ribose 1-phosphate + hypoxanthine. It catalyses the reaction thymidine + phosphate = 2-deoxy-alpha-D-ribose 1-phosphate + thymine. It carries out the reaction uridine + phosphate = alpha-D-ribose 1-phosphate + uracil. The catalysed reaction is xanthosine + phosphate = alpha-D-ribose 1-phosphate + xanthine. Catalyzes the phosphorolysis of diverse nucleosides, yielding D-ribose 1-phosphate and the respective free bases. Can use uridine, adenosine, guanosine, cytidine, thymidine, inosine and xanthosine as substrates. Also catalyzes the reverse reactions. The protein is Pyrimidine/purine nucleoside phosphorylase of Laribacter hongkongensis (strain HLHK9).